The primary structure comprises 230 residues: Large ribosomal subunit protein uL1 (230 aa).

The protein belongs to the universal ribosomal protein uL1 family. Part of the 50S ribosomal subunit.

Binds directly to 23S rRNA. The L1 stalk is quite mobile in the ribosome, and is involved in E site tRNA release. Functionally, protein L1 is also a translational repressor protein, it controls the translation of the L11 operon by binding to its mRNA. The sequence is that of Large ribosomal subunit protein uL1 from Nitrobacter winogradskyi (strain ATCC 25391 / DSM 10237 / CIP 104748 / NCIMB 11846 / Nb-255).